Consider the following 312-residue polypeptide: Malate dehydrogenase (312 aa).

NAD(+)-binding positions include 7-13 and aspartate 34; that span reads GAAGGIG. Arginine 81 and arginine 87 together coordinate substrate. NAD(+)-binding positions include asparagine 94 and 117–119; that span reads ITN. 2 residues coordinate substrate: asparagine 119 and arginine 153. Residue histidine 177 is the Proton acceptor of the active site. Methionine 227 contributes to the NAD(+) binding site.

The protein belongs to the LDH/MDH superfamily. MDH type 1 family. Homodimer.

The enzyme catalyses (S)-malate + NAD(+) = oxaloacetate + NADH + H(+). In terms of biological role, catalyzes the reversible oxidation of malate to oxaloacetate. The chain is Malate dehydrogenase from Pectobacterium carotovorum subsp. carotovorum (strain PC1).